A 322-amino-acid chain; its full sequence is Deoxyhypusine hydroxylase (322 aa).

HEAT-like PBS-type repeat units follow at residues 76-102 (LKHE…VMLD), 109-135 (VRHE…SRRE), 234-260 (FKHE…VLKR), and 267-293 (VRHE…HLQD). Fe cation-binding residues include His-78, Glu-79, His-111, Glu-112, His-236, Glu-237, His-269, and Glu-270.

Belongs to the deoxyhypusine hydroxylase family. The cofactor is Fe(2+).

Its subcellular location is the cytoplasm. The protein localises to the nucleus. It catalyses the reaction [eIF5A protein]-deoxyhypusine + AH2 + O2 = [eIF5A protein]-hypusine + A + H2O. The protein operates within protein modification; eIF5A hypusination. In terms of biological role, catalyzes the hydroxylation of the N(6)-(4-aminobutyl)-L-lysine intermediate to form hypusine, an essential post-translational modification only found in mature eIF-5A factor. This Eremothecium gossypii (strain ATCC 10895 / CBS 109.51 / FGSC 9923 / NRRL Y-1056) (Yeast) protein is Deoxyhypusine hydroxylase.